A 196-amino-acid polypeptide reads, in one-letter code: Protein LIGHT-DEPENDENT SHORT HYPOCOTYLS 6 (196 aa).

A compositionally biased stretch (basic and acidic residues) spans 1 to 16; it reads MESADSGRSDPVKGDD. 2 disordered regions span residues 1–36 and 149–196; these read MESA…ESQK and ARGI…AVPP. The region spanning 31–158 is the ALOG domain; it reads RYESQKRRDW…ARGIPYEKKK (128 aa). A Nuclear localization signal motif is present at residues 156–160; it reads KKKRK.

It belongs to the plant homeotic and developmental regulators ALOG protein family.

It is found in the nucleus. Probable transcription regulator that acts as a developmental regulator by promoting cell growth in response to light. This chain is Protein LIGHT-DEPENDENT SHORT HYPOCOTYLS 6 (LSH6), found in Arabidopsis thaliana (Mouse-ear cress).